The sequence spans 346 residues: tRNA N6-adenosine threonylcarbamoyltransferase (346 aa).

Residues His-111 and His-115 each contribute to the Fe cation site. Residues 134–138 (LVSGG), Asp-167, Gly-180, and Asn-279 contribute to the substrate site. Fe cation is bound at residue Asp-307.

This sequence belongs to the KAE1 / TsaD family. Fe(2+) is required as a cofactor.

It is found in the cytoplasm. The enzyme catalyses L-threonylcarbamoyladenylate + adenosine(37) in tRNA = N(6)-L-threonylcarbamoyladenosine(37) in tRNA + AMP + H(+). In terms of biological role, required for the formation of a threonylcarbamoyl group on adenosine at position 37 (t(6)A37) in tRNAs that read codons beginning with adenine. Is involved in the transfer of the threonylcarbamoyl moiety of threonylcarbamoyl-AMP (TC-AMP) to the N6 group of A37, together with TsaE and TsaB. TsaD likely plays a direct catalytic role in this reaction. The chain is tRNA N6-adenosine threonylcarbamoyltransferase from Burkholderia lata (strain ATCC 17760 / DSM 23089 / LMG 22485 / NCIMB 9086 / R18194 / 383).